The following is a 242-amino-acid chain: Probable transcriptional regulatory protein MHP7448_0474 (242 aa).

Belongs to the TACO1 family.

It is found in the cytoplasm. This chain is Probable transcriptional regulatory protein MHP7448_0474, found in Mesomycoplasma hyopneumoniae (strain 7448) (Mycoplasma hyopneumoniae).